The chain runs to 740 residues: Glycerol dehydrogenase large subunit (740 aa).

Positions 1–29 (MRRPYLLATAAGLALACSPLIAHAQFAPA) are cleaved as a signal peptide. Disordered regions lie at residues 28–105 (PAGA…GDWV) and 442–468 (LPVE…PWSV). Residues 34–43 (EPSSSVPGPG) show a composition bias toward low complexity. Polar residues predominate over residues 46–58 (SEPTENSPKSQSY).

This sequence belongs to the bacterial PQQ dehydrogenase family. It depends on pyrroloquinoline quinone as a cofactor.

The protein localises to the secreted. It catalyses the reaction glycerol + A = dihydroxyacetone + AH2. In terms of biological role, catalyzes the oxidation of glycerol to glycerone. Also acts, more slowly, on a number of other polyols including D-sorbitol, D-arabinitol, D-mannitol, meso-erythritol, adonitol and propylene glycol. The protein is Glycerol dehydrogenase large subunit (sldA) of Gluconobacter thailandicus.